The primary structure comprises 90 residues: Long neurotoxin OH-34 (90 aa).

The signal sequence occupies residues 1–20 (KTLLLTLVVVTILCLDLGYT). 5 cysteine pairs are disulfide-bonded: cysteine 23–cysteine 41, cysteine 34–cysteine 62, cysteine 47–cysteine 51, cysteine 66–cysteine 77, and cysteine 78–cysteine 83.

It belongs to the three-finger toxin family. Long-chain subfamily. Type II alpha-neurotoxin sub-subfamily. In terms of tissue distribution, expressed by the venom gland.

It is found in the secreted. In terms of biological role, binds with high affinity to muscular (alpha-1/CHRNA1) and neuronal (alpha-7/CHRNA7) nicotinic acetylcholine receptor (nAChR) and inhibits acetylcholine from binding to the receptor, thereby impairing neuromuscular and neuronal transmission. The chain is Long neurotoxin OH-34 from Ophiophagus hannah (King cobra).